We begin with the raw amino-acid sequence, 418 residues long: Glutamyl-tRNA reductase (418 aa).

Substrate is bound by residues 49 to 52 (TCNR), Ser-107, 112 to 114 (EPQ), and Gln-118. Cys-50 (nucleophile) is an active-site residue. 187-192 (GAGETI) contributes to the NADP(+) binding site.

The protein belongs to the glutamyl-tRNA reductase family. Homodimer.

The catalysed reaction is (S)-4-amino-5-oxopentanoate + tRNA(Glu) + NADP(+) = L-glutamyl-tRNA(Glu) + NADPH + H(+). The protein operates within porphyrin-containing compound metabolism; protoporphyrin-IX biosynthesis; 5-aminolevulinate from L-glutamyl-tRNA(Glu): step 1/2. Functionally, catalyzes the NADPH-dependent reduction of glutamyl-tRNA(Glu) to glutamate 1-semialdehyde (GSA). In Vibrio parahaemolyticus serotype O3:K6 (strain RIMD 2210633), this protein is Glutamyl-tRNA reductase.